The primary structure comprises 689 residues: MSEKTFLVEIGTEELPPKALRSLAESFAANFTAELDNAGLAHGNVEWFAAPRRLALKVANLAESQPDREVEKRGPAIAQAFDAEGKPSKAAEGWARGCGITVDQAERLKTDKGEWLLYRAHVKGESTEALVPNMVATSLAKLPIPKLMRWGASDVHFVRPVHTVTLLLGDKVIPAIILGIQSDRVIRGHRFMGEPEFTIDNADQYPQILLERGKVIADYEARKAKIKADAEEAARKIGGNADLSESLLEEVASLVEWPVVLTAKFEEKFLAVPAEALVYTMKGDQKYFPVYDNAGKLLPNFIFVANIESKDPTQIISGNEKVVRPRLADAEFFFNTDRKKRLEDHLPRLQTVLFQQQLGTLRDKTDRIQALAGWIAGQIGADVNHATRAGLLSKCDLMTNMVFEFTDTQGVMGMHYARHDGEAEDVAVALNEQYQPRFAGDDLPSNPVACALAIADKMDTLAGIFGIGQHPKGDKDPFALRRAALGVLRIIVEKNLNLDLQTLTEEAARLYGDKLTNANVVDDVIDFMLGRFRAWYQDEGYTVDTIQAVLARRPTRPADFDARMKAVSHFRTLEEASALAAANKRVSNILAKATEPLNDIVHASVLKEAAEIELARHLVVLRDKLQPYFADGRYQEALIELAALRAPVDEFFENVMVNAEEKDIRINRLTLLSKLRELFLQVADISLLQ.

This sequence belongs to the class-II aminoacyl-tRNA synthetase family. In terms of assembly, tetramer of two alpha and two beta subunits.

It localises to the cytoplasm. The catalysed reaction is tRNA(Gly) + glycine + ATP = glycyl-tRNA(Gly) + AMP + diphosphate. The sequence is that of Glycine--tRNA ligase beta subunit from Salmonella agona (strain SL483).